Here is a 102-residue protein sequence, read N- to C-terminus: Small ribosomal subunit protein uS10 (102 aa).

This sequence belongs to the universal ribosomal protein uS10 family. As to quaternary structure, part of the 30S ribosomal subunit.

Functionally, involved in the binding of tRNA to the ribosomes. The sequence is that of Small ribosomal subunit protein uS10 from Methanoregula boonei (strain DSM 21154 / JCM 14090 / 6A8).